The following is a 67-amino-acid chain: Large ribosomal subunit protein uL29 (67 aa).

This sequence belongs to the universal ribosomal protein uL29 family.

This is Large ribosomal subunit protein uL29 from Staphylothermus marinus (strain ATCC 43588 / DSM 3639 / JCM 9404 / F1).